The primary structure comprises 80 residues: Large ribosomal subunit protein eL20 (80 aa).

The protein belongs to the eukaryotic ribosomal protein eL20 family. In terms of assembly, part of the 50S ribosomal subunit. Binds 23S rRNA.

In Methanopyrus kandleri (strain AV19 / DSM 6324 / JCM 9639 / NBRC 100938), this protein is Large ribosomal subunit protein eL20.